Reading from the N-terminus, the 160-residue chain is Transcription elongation factor GreA (160 aa).

Residues 50–70 (AAREQQSFNEGRIQELEAKLS) adopt a coiled-coil conformation.

Belongs to the GreA/GreB family.

Functionally, necessary for efficient RNA polymerase transcription elongation past template-encoded arresting sites. The arresting sites in DNA have the property of trapping a certain fraction of elongating RNA polymerases that pass through, resulting in locked ternary complexes. Cleavage of the nascent transcript by cleavage factors such as GreA or GreB allows the resumption of elongation from the new 3'terminus. GreA releases sequences of 2 to 3 nucleotides. The chain is Transcription elongation factor GreA from Legionella pneumophila (strain Corby).